A 165-amino-acid polypeptide reads, in one-letter code: Nucleotide-binding protein NATL1_05371 (165 aa).

The protein belongs to the YajQ family.

Its function is as follows. Nucleotide-binding protein. The protein is Nucleotide-binding protein NATL1_05371 of Prochlorococcus marinus (strain NATL1A).